A 260-amino-acid polypeptide reads, in one-letter code: ATP synthase subunit a (260 aa).

5 helical membrane-spanning segments follow: residues 27–47, 90–110, 132–154, 208–228, and 230–250; these read FWTV…LFIW, IAPL…MDLI, SADV…YYSI, LIFI…LSVP, and AIFH…LTIV.

This sequence belongs to the ATPase A chain family. In terms of assembly, F-type ATPases have 2 components, CF(1) - the catalytic core - and CF(0) - the membrane proton channel. CF(1) has five subunits: alpha(3), beta(3), gamma(1), delta(1), epsilon(1). CF(0) has three main subunits: a(1), b(2) and c(9-12). The alpha and beta chains form an alternating ring which encloses part of the gamma chain. CF(1) is attached to CF(0) by a central stalk formed by the gamma and epsilon chains, while a peripheral stalk is formed by the delta and b chains.

It is found in the cell inner membrane. Its function is as follows. Key component of the proton channel; it plays a direct role in the translocation of protons across the membrane. This is ATP synthase subunit a from Aeromonas hydrophila subsp. hydrophila (strain ATCC 7966 / DSM 30187 / BCRC 13018 / CCUG 14551 / JCM 1027 / KCTC 2358 / NCIMB 9240 / NCTC 8049).